A 363-amino-acid chain; its full sequence is p21-activated protein kinase-interacting protein 1-like (363 aa).

5 WD repeats span residues 38-75 (AHTASVSVLAVNNRFVATGSRDETIQIYDMKKKVEHGA), 78-116 (HHNGTITCLEFYGNTHLLSGAEDGLICVWNTKKWECQQT), 119-158 (AHKGQVLSLSIHPSGKLALSVGTDKTLRTWNLVEGRSAFI), 200-238 (NNPKRISSAQFITDALIAVAGDEEVIRLYDTASQKCVCE), and 241-282 (AHEN…VQTS). The segment at 309 to 363 (KEKSNTAVTASAVKDCDRPKKKKAQNETTDKEASETQVVHKKRKPETKQKKKKPS) is disordered. Residues 322-342 (KDCDRPKKKKAQNETTDKEAS) show a composition bias toward basic and acidic residues. A compositionally biased stretch (basic residues) spans 347-363 (VHKKRKPETKQKKKKPS).

Its subcellular location is the nucleus. It localises to the nucleolus. Functionally, negatively regulates the PAK1 kinase. PAK1 is a member of the PAK kinase family, which has been shown to play a positive role in the regulation of signaling pathways involving MAPK8 and RELA. PAK1 exists as an inactive homodimer, which is activated by binding of small GTPases such as CDC42 to an N-terminal regulatory domain. PAK1IP1 also binds to the N-terminus of PAK1, and inhibits the specific activation of PAK1 by CDC42. May be involved in ribosomal large subunit assembly. This chain is p21-activated protein kinase-interacting protein 1-like (pak1ip1), found in Xenopus laevis (African clawed frog).